A 249-amino-acid chain; its full sequence is Exosome complex component Rrp41 (249 aa).

Belongs to the RNase PH family. Rrp41 subfamily. In terms of assembly, component of the archaeal exosome complex. Forms a hexameric ring-like arrangement composed of 3 Rrp41-Rrp42 heterodimers. The hexameric ring associates with a trimer of Rrp4 and/or Csl4 subunits.

The protein localises to the cytoplasm. In terms of biological role, catalytic component of the exosome, which is a complex involved in RNA degradation. Has 3'-&gt;5' exoribonuclease activity. Can also synthesize heteromeric RNA-tails. This Thermococcus gammatolerans (strain DSM 15229 / JCM 11827 / EJ3) protein is Exosome complex component Rrp41.